The primary structure comprises 294 residues: 3-methyl-2-oxobutanoate hydroxymethyltransferase 1 (294 aa).

Mg(2+) is bound at residue aspartate 55. 3-methyl-2-oxobutanoate-binding positions include 55–56 (DS) and lysine 123. Glutamate 192 functions as the Proton acceptor in the catalytic mechanism.

The protein belongs to the PanB family. Homodecamer; pentamer of dimers. The cofactor is Mg(2+).

The protein resides in the cytoplasm. The enzyme catalyses 3-methyl-2-oxobutanoate + (6R)-5,10-methylene-5,6,7,8-tetrahydrofolate + H2O = 2-dehydropantoate + (6S)-5,6,7,8-tetrahydrofolate. The protein operates within cofactor biosynthesis; (R)-pantothenate biosynthesis; (R)-pantoate from 3-methyl-2-oxobutanoate: step 1/2. Functionally, catalyzes the reversible reaction in which hydroxymethyl group from 5,10-methylenetetrahydrofolate is transferred onto alpha-ketoisovalerate to form ketopantoate. This is 3-methyl-2-oxobutanoate hydroxymethyltransferase 1 from Methylibium petroleiphilum (strain ATCC BAA-1232 / LMG 22953 / PM1).